The sequence spans 231 residues: Urease subunit gamma/beta (231 aa).

Residues 1–101 (MLLTPTELER…LVTVHQPIRP (101 aa)) form a urease gamma region. A urease beta region spans residues 102–231 (GKLPLAVMPT…RARAQHFKGA (130 aa)).

In the N-terminal section; belongs to the urease gamma subunit family. It in the C-terminal section; belongs to the urease beta subunit family. As to quaternary structure, heterohexamer of 3 UreC (alpha) and 3 UreAB (gamma/beta) subunits.

It localises to the cytoplasm. It carries out the reaction urea + 2 H2O + H(+) = hydrogencarbonate + 2 NH4(+). The protein operates within nitrogen metabolism; urea degradation; CO(2) and NH(3) from urea (urease route): step 1/1. In Pseudomonas syringae pv. tomato (strain ATCC BAA-871 / DC3000), this protein is Urease subunit gamma/beta.